The sequence spans 514 residues: JmjC domain-containing histone demethylation protein 1 (514 aa).

Residues 4 to 62 (IDTCPICVESPLEDSTTFNNIAWLQCDICNQWFHASCLKIPKIEVNNLHSYHCEGCSKS) form a PHD-type zinc finger. Residues 220-384 (SDVDSFGKSF…MHLRIYEIEK (165 aa)) form the JmjC domain. Thr-267 provides a ligand contact to substrate. Positions 270 and 272 each coordinate Fe cation. Lys-287 serves as a coordination point for substrate. His-352 provides a ligand contact to Fe cation. Residues 432–454 (KSEAHSRGEVHTKTETHAVKDEP) are compositionally biased toward basic and acidic residues. The segment at 432–456 (KSEAHSRGEVHTKTETHAVKDEPQP) is disordered.

This sequence belongs to the JHDM1 histone demethylase family. Fe(2+) serves as cofactor.

Its subcellular location is the nucleus. It catalyses the reaction N(6),N(6)-dimethyl-L-lysyl(36)-[histone H3] + 2 2-oxoglutarate + 2 O2 = L-lysyl(36)-[histone H3] + 2 formaldehyde + 2 succinate + 2 CO2. In terms of biological role, histone demethylase that specifically demethylates 'Lys-36' of histone H3, thereby playing a central role in histone code. The protein is JmjC domain-containing histone demethylation protein 1 (JHD1) of Debaryomyces hansenii (strain ATCC 36239 / CBS 767 / BCRC 21394 / JCM 1990 / NBRC 0083 / IGC 2968) (Yeast).